Reading from the N-terminus, the 679-residue chain is Glycine--tRNA ligase beta subunit (679 aa).

This sequence belongs to the class-II aminoacyl-tRNA synthetase family. In terms of assembly, tetramer of two alpha and two beta subunits.

It localises to the cytoplasm. The enzyme catalyses tRNA(Gly) + glycine + ATP = glycyl-tRNA(Gly) + AMP + diphosphate. In Streptococcus uberis (strain ATCC BAA-854 / 0140J), this protein is Glycine--tRNA ligase beta subunit.